Here is a 305-residue protein sequence, read N- to C-terminus: Protoheme IX farnesyltransferase (305 aa).

9 helical membrane-spanning segments follow: residues 31–51 (VMSL…YSVH), 52–72 (PFIA…AGAI), 96–118 (VIES…FFMA), 123–145 (LLAS…IWLK), 151–171 (NIVI…AAVS), 179–199 (IILF…LALF), 225–245 (ILIY…IGMN), 247–267 (FIYL…AGSL), and 281–301 (FAYS…TNTI).

The protein belongs to the UbiA prenyltransferase family. Protoheme IX farnesyltransferase subfamily.

The protein resides in the cell membrane. The enzyme catalyses heme b + (2E,6E)-farnesyl diphosphate + H2O = Fe(II)-heme o + diphosphate. It functions in the pathway porphyrin-containing compound metabolism; heme O biosynthesis; heme O from protoheme: step 1/1. Functionally, converts heme B (protoheme IX) to heme O by substitution of the vinyl group on carbon 2 of heme B porphyrin ring with a hydroxyethyl farnesyl side group. This Rickettsia africae (strain ESF-5) protein is Protoheme IX farnesyltransferase.